The primary structure comprises 169 residues: Large ribosomal subunit protein uL10 (169 aa).

Belongs to the universal ribosomal protein uL10 family. In terms of assembly, part of the ribosomal stalk of the 50S ribosomal subunit. The N-terminus interacts with L11 and the large rRNA to form the base of the stalk. The C-terminus forms an elongated spine to which L12 dimers bind in a sequential fashion forming a multimeric L10(L12)X complex.

In terms of biological role, forms part of the ribosomal stalk, playing a central role in the interaction of the ribosome with GTP-bound translation factors. The chain is Large ribosomal subunit protein uL10 from Rickettsia africae (strain ESF-5).